The following is a 217-amino-acid chain: Probable transaldolase (217 aa).

Residue lysine 83 is the Schiff-base intermediate with substrate of the active site.

It belongs to the transaldolase family. Type 3B subfamily.

The protein resides in the cytoplasm. It carries out the reaction D-sedoheptulose 7-phosphate + D-glyceraldehyde 3-phosphate = D-erythrose 4-phosphate + beta-D-fructose 6-phosphate. It participates in carbohydrate degradation; pentose phosphate pathway; D-glyceraldehyde 3-phosphate and beta-D-fructose 6-phosphate from D-ribose 5-phosphate and D-xylulose 5-phosphate (non-oxidative stage): step 2/3. In terms of biological role, transaldolase is important for the balance of metabolites in the pentose-phosphate pathway. The sequence is that of Probable transaldolase from Roseobacter denitrificans (strain ATCC 33942 / OCh 114) (Erythrobacter sp. (strain OCh 114)).